A 304-amino-acid polypeptide reads, in one-letter code: ATP phosphoribosyltransferase (304 aa).

Belongs to the ATP phosphoribosyltransferase family. Long subfamily. Mg(2+) is required as a cofactor.

Its subcellular location is the cytoplasm. The catalysed reaction is 1-(5-phospho-beta-D-ribosyl)-ATP + diphosphate = 5-phospho-alpha-D-ribose 1-diphosphate + ATP. The protein operates within amino-acid biosynthesis; L-histidine biosynthesis; L-histidine from 5-phospho-alpha-D-ribose 1-diphosphate: step 1/9. Feedback inhibited by histidine. In terms of biological role, catalyzes the condensation of ATP and 5-phosphoribose 1-diphosphate to form N'-(5'-phosphoribosyl)-ATP (PR-ATP). Has a crucial role in the pathway because the rate of histidine biosynthesis seems to be controlled primarily by regulation of HisG enzymatic activity. The protein is ATP phosphoribosyltransferase of Xanthomonas campestris pv. campestris (strain B100).